Consider the following 439-residue polypeptide: Ribosomal protein uS12 methylthiotransferase RimO (439 aa).

Residues 7-119 enclose the MTTase N-terminal domain; that stretch reads KQLCLISLGC…IDIMIAKKQN (113 aa). [4Fe-4S] cluster is bound by residues cysteine 16, cysteine 50, cysteine 82, cysteine 151, cysteine 155, and cysteine 158. Residues 137–368 enclose the Radical SAM core domain; that stretch reads TGSSVHAYVK…ALKHQNHSFK (232 aa).

This sequence belongs to the methylthiotransferase family. RimO subfamily. The cofactor is [4Fe-4S] cluster.

It localises to the cytoplasm. The catalysed reaction is L-aspartate(89)-[ribosomal protein uS12]-hydrogen + (sulfur carrier)-SH + AH2 + 2 S-adenosyl-L-methionine = 3-methylsulfanyl-L-aspartate(89)-[ribosomal protein uS12]-hydrogen + (sulfur carrier)-H + 5'-deoxyadenosine + L-methionine + A + S-adenosyl-L-homocysteine + 2 H(+). Functionally, catalyzes the methylthiolation of an aspartic acid residue of ribosomal protein uS12. This chain is Ribosomal protein uS12 methylthiotransferase RimO, found in Helicobacter pylori (strain G27).